Consider the following 226-residue polypeptide: Endonuclease NucS (226 aa).

Belongs to the NucS endonuclease family.

It is found in the cytoplasm. Functionally, cleaves both 3' and 5' ssDNA extremities of branched DNA structures. The protein is Endonuclease NucS of Mycobacterium tuberculosis (strain CDC 1551 / Oshkosh).